Here is a 149-residue protein sequence, read N- to C-terminus: Large ribosomal subunit protein bL9 (149 aa).

The protein belongs to the bacterial ribosomal protein bL9 family.

Functionally, binds to the 23S rRNA. This chain is Large ribosomal subunit protein bL9, found in Ligilactobacillus salivarius (strain UCC118) (Lactobacillus salivarius).